A 64-amino-acid chain; its full sequence is Large ribosomal subunit protein bL35 (64 aa).

The segment at 1-28 is disordered; that stretch reads MPKMKTHSGAKKRFKLTGSGKLKRQQAN.

The protein belongs to the bacterial ribosomal protein bL35 family.

In Renibacterium salmoninarum (strain ATCC 33209 / DSM 20767 / JCM 11484 / NBRC 15589 / NCIMB 2235), this protein is Large ribosomal subunit protein bL35.